Here is a 992-residue protein sequence, read N- to C-terminus: Protein translocase subunit SecA (992 aa).

Residues Gln-86, 104 to 108 (GEGKT), and Asp-535 contribute to the ATP site. The interval 885 to 910 (IAGGSSEVEQTRKPQRRTVQQIGRND) is disordered. Residues Cys-912, Cys-914, Cys-923, and His-924 each contribute to the Zn(2+) site. Positions 965–992 (IDNGTLPAASPKTPRGRQPQAVPRGKKR) are disordered.

It belongs to the SecA family. Monomer and homodimer. Part of the essential Sec protein translocation apparatus which comprises SecA, SecYEG and auxiliary proteins SecDF. Other proteins may also be involved. Zn(2+) is required as a cofactor.

The protein localises to the cell membrane. It is found in the cytoplasm. It carries out the reaction ATP + H2O + cellular proteinSide 1 = ADP + phosphate + cellular proteinSide 2.. Part of the Sec protein translocase complex. Interacts with the SecYEG preprotein conducting channel. Has a central role in coupling the hydrolysis of ATP to the transfer of proteins into and across the cell membrane, serving as an ATP-driven molecular motor driving the stepwise translocation of polypeptide chains across the membrane. The protein is Protein translocase subunit SecA of Chloroflexus aggregans (strain MD-66 / DSM 9485).